A 609-amino-acid polypeptide reads, in one-letter code: Thiamine metabolism regulatory protein THI3 (609 aa).

The disordered stretch occupies residues 578-598 (SKQVQEENENSSAVNTPTPEF).

It belongs to the TPP enzyme family. It depends on Mg(2+) as a cofactor. Thiamine diphosphate is required as a cofactor.

The protein localises to the nucleus. It carries out the reaction 4-methyl-2-oxopentanoate + H(+) = 3-methylbutanal + CO2. The enzyme catalyses (S)-3-methyl-2-oxopentanoate + H(+) = 2-methylbutanal + CO2. It functions in the pathway amino-acid degradation; Ehrlich pathway. In terms of biological role, one of five 2-oxo acid decarboxylases (PDC1, PDC5, PDC6, ARO10, and THI3) involved in amino acid catabolism. The enzyme catalyzes the decarboxylation of amino acids, which, in a first step, have been transaminated to the corresponding 2-oxo acids (alpha-keto-acids). In a third step, the resulting aldehydes are reduced to alcohols, collectively referred to as fusel oils or alcohols. Its preferred substrates are the transaminated amino acids derived from leucine (4-methyl-2-oxopentanoate, also alpha-keto-isocaproate) and isoleucine ((3S)-3-methyl-2-oxopentanoate, also alpha-keto-beta-methylvalerate), whereas transaminated valine, transaminated aromatic amino acids, and pyruvate are no substrates. In analogy to the pyruvate decarboxylases the enzyme may in a side-reaction catalyze condensation (or carboligation) reactions leading to the formation of 2-hydroxy ketone, collectively called acyloins. The enzyme is also positively regulating the thiamine metabolism by a molecular mechanism that may involve thiamine concentration sensing and signal transmission. The polypeptide is Thiamine metabolism regulatory protein THI3 (THI3) (Saccharomyces cerevisiae (strain ATCC 204508 / S288c) (Baker's yeast)).